The sequence spans 651 residues: DNA endonuclease RBBP8 (651 aa).

Coiled coils occupy residues 35–84 (LQEL…EDRL) and 117–138 (ISELEAERKTLTDENRRLSLEL). Disordered stretches follow at residues 138 to 199 (LERL…PESR), 363 to 433 (NGRL…EHQA), and 487 to 539 (YESC…SDKS). Residues 363–379 (NGRLQSKNQETSEIETT) are compositionally biased toward polar residues. The segment covering 380 to 391 (QDSKKKCLDGHT) has biased composition (basic and acidic residues). Residues 503–515 (VYEEEREEDDPEE) show a composition bias toward acidic residues. Basic and acidic residues predominate over residues 525 to 539 (RPADRKPLVSDSDKS). A phosphothreonine mark is found at threonine 599 and threonine 611.

It belongs to the COM1/SAE2/CtIP family. As to quaternary structure, homotetramer; formed by antiparallel association of helical extensions protruding from the N-termini of two parallel coiled-coil dimers. Interacts with the MRN complex; the interaction links DNA sensing to resection. Interacts with samhd1. Phosphorylation at Thr-599 and Thr-611 promote interaction with nbn and recruitment to double-strand breaks (DSBs).

It is found in the nucleus. The protein localises to the chromosome. Endonuclease that cooperates with the MRE11-RAD50-NBN (MRN) complex in DNA-end resection, the first step of double-strand break (DSB) repair through the homologous recombination (HR) pathway. Functions downstream of the MRN complex and ATM, promotes ATR activation and its recruitment to DSBs in the S/G2 phase facilitating the generation of ssDNA. Specifically promotes the endonuclease activity of the MRN complex to clear DNA ends containing protein adducts: recruited to DSBs by nbn following phosphorylation, and promotes the endonuclease of mre11 to clear protein-DNA adducts and generate clean double-strand break ends. The sequence is that of DNA endonuclease RBBP8 (rbbp8) from Danio rerio (Zebrafish).